The chain runs to 143 residues: Hemoglobin subunit alpha-1 (143 aa).

Residue Ser-2 is modified to N-acetylserine. Positions 2 to 143 (SLSTKDKETV…VSLALAEKYR (142 aa)) constitute a Globin domain. An O2-binding site is contributed by His-60. A heme b-binding site is contributed by His-89.

It belongs to the globin family. In terms of assembly, hb1 is a heterotetramer of two alpha-1 chains and two beta-1 chains. Red blood cells.

Involved in oxygen transport from gills to the various peripheral tissues. The sequence is that of Hemoglobin subunit alpha-1 from Liparis tunicatus (Kelp snailfish).